A 338-amino-acid chain; its full sequence is tRNA methyltransferase 10 homolog A (338 aa).

2 disordered regions span residues 1 to 91 and 296 to 338; these read MSSE…DRKR and RVEG…SVPH. Serine 22 is modified (phosphoserine). Residues 52–80 are a coiled coil; that stretch reads KQWEEQRELRKQKRKEKRKRKQLERQCQP. Residues 61 to 73 show a composition bias toward basic residues; it reads RKQKRKEKRKRKQ. In terms of domain architecture, SAM-dependent MTase TRM10-type spans 88-279; the sequence is DRKRIRRDVV…TILPQRKGAV (192 aa). The span at 308-328 shows a compositional bias: basic and acidic residues; sequence EENRHELDSTHEEEKQDKENS. Positions 329–338 are enriched in polar residues; that stretch reads TESTVNSVPH. Serine 335 carries the post-translational modification Phosphoserine.

The protein belongs to the class IV-like SAM-binding methyltransferase superfamily. TRM10 family. As to quaternary structure, interacts with tRNA.

It localises to the nucleus. Its subcellular location is the nucleolus. It carries out the reaction guanosine(9) in tRNA + S-adenosyl-L-methionine = N(1)-methylguanosine(9) in tRNA + S-adenosyl-L-homocysteine + H(+). Its function is as follows. S-adenosyl-L-methionine-dependent guanine N(1)-methyltransferase that catalyzes the formation of N(1)-methylguanine at position 9 (m1G9) in tRNAs. Probably not able to catalyze formation of N(1)-methyladenine at position 9 (m1A9) in tRNAs. In Bos taurus (Bovine), this protein is tRNA methyltransferase 10 homolog A (TRMT10A).